Reading from the N-terminus, the 1087-residue chain is Synaptopodin-2 (1087 aa).

The region spanning 6–88 (FICISMTGGA…SLHLLVKRPS (83 aa)) is the PDZ domain. 3 disordered regions span residues 24-52 (GKEE…EGDE), 88-112 (SSGT…HEGP), and 207-272 (GPIV…AGLP). Over residues 101-112 (TTNHQHLTHEGP) the composition is skewed to basic and acidic residues. Composition is skewed to polar residues over residues 207–230 (GPIV…SQLE) and 246–255 (TSLTSSTSSG). Phosphoserine is present on residues S300, S319, and S320. The segment at 320-359 (SEGTEHGEDQRSGKDQSRPHKHRARHARLRRSESLSEKQV) is disordered. Positions 322–337 (GTEHGEDQRSGKDQSR) are enriched in basic and acidic residues. T323 carries the post-translational modification Phosphothreonine. A compositionally biased stretch (basic residues) spans 338–348 (PHKHRARHARL). Basic and acidic residues predominate over residues 349-359 (RRSESLSEKQV). The Nuclear localization signal motif lies at 388–396 (KKRRRRARK). Phosphoserine is present on residues S540, S541, S543, and S546. An interaction with YWHAB region spans residues 551–557 (RSLASVP). S555 is subject to Phosphoserine; by PKA. Disordered regions lie at residues 581-817 (AKPF…ALNL) and 832-863 (NYTP…GMSG). S596 carries the post-translational modification Phosphoserine. The segment at 599 to 804 (RSVTSPISDF…AVSSIKIAQP (206 aa)) is interaction with YWHAB. T602 is modified (phosphothreonine; by PKA and CaMK2). S603 is modified (phosphoserine). 2 stretches are compositionally biased toward pro residues: residues 609–622 (PAPP…PPPE) and 636–647 (AQPPPWPQPAPW). The short motif at 611-614 (PPPY) is the PPPY motif element. Residue Y614 is modified to Phosphotyrosine. Position 618 is a phosphoserine (S618). Positions 656-796 (SEQIASRDER…PPNPPQVTAV (141 aa)) are F-actin binding. Residues 656–909 (SEQIASRDER…LPASWKYSSN (254 aa)) form an F-actin bundling activity region. 2 interaction with ACTN2 regions span residues 656 to 917 (SEQI…PPVA) and 894 to 1087 (QSPT…VVEE). A phosphoserine mark is found at S697 and S719. The interval 740–893 (AKQKTPPPVA…DTVQAHTVRA (154 aa)) is actin binding. T744 bears the Phosphothreonine mark. Residues 751–777 (KPAVKSPSSSQPVAPVSPVWSPGVAPA) show a composition bias toward low complexity. Phosphoserine is present on residues S767 and S771. Residues 781-797 (AFSTSNPPNPPQVTAVS) are compositionally biased toward polar residues. An interaction with FLNC region spans residues 803 to 1087 (QPAAPPARPA…QVWKPSVVEE (285 aa)). 3 positions are modified to phosphoserine: S895, S899, and S903. Disordered stretches follow at residues 930–952 (AIKS…KKPL), 970–1012 (FTFQ…PTNA), and 1037–1060 (PVSA…STSY). The segment at 993 to 1012 (PAMKQALPPRQANVGSPTNA) is interaction with ZYX. Phosphoserine occurs at positions 1008 and 1050. The segment covering 1037-1051 (PVSASPVPVSVPTSP) has biased composition (low complexity).

Belongs to the synaptopodin family. In terms of assembly, may self-associate in muscle cells under oxidative stress. Binds F-actin. Interacts with ACTN2; ACTN2 is proposed to anchor SYOP2 at Z lines in mature myocytes. Interacts with AKAP6, PPP3CA and CAMK2A. Interacts (phosphorylated form) with YWHAB; YWHAB competes with ACTN2 for interaction with SYNPO2. Interacts with KPNA2; mediating nuclear import of SYNOP2; dependent on interaction with YWHAB. Interacts with IPO13; may be implicated in SYNOP2 nuclear import. Interacts with ZYX, FLNC, ILK. Interacts with BAG3 (via WW 1 domain). May associate with the CASA complex consisting of HSPA8, HSPB8 and BAG3. Interacts with VPS18. Post-translationally, phosphorylated by PKA, and by CaMK2 at multiple sites. Dephosphorylated by calcineurin at Ser-555 and Thr-602; abrogating interaction with YWHAB and impairing nuclear import. In terms of tissue distribution, expressed in skeletal muscle, heart, colon, stomach, uterus and lung. Expression is restricted to muscle cell layers in colon, uterus and stomach.

The protein resides in the nucleus. It is found in the cytoplasm. The protein localises to the myofibril. It localises to the sarcomere. Its subcellular location is the z line. The protein resides in the cell junction. It is found in the focal adhesion. In terms of biological role, has an actin-binding and actin-bundling activity. Can induce the formation of F-actin networks. At the sarcomeric Z lines is proposed to act as adapter protein that links nascent myofibers to the sarcolemma via ZYX and may play a role in early assembly and stabilization of the Z lines. Involved in autophagosome formation. May play a role in chaperone-assisted selective autophagy (CASA) involved in Z lines maintenance in striated muscle under mechanical tension; may link the client-processing CASA chaperone machinery to a membrane-tethering and fusion complex providing autophagosome membranes. Involved in regulation of cell migration. May be a tumor suppressor. This is Synaptopodin-2 (Synpo2) from Mus musculus (Mouse).